The primary structure comprises 600 residues: Methionine--tRNA ligase (600 aa).

The short motif at 11–21 (PYANGPRHIGH) is the 'HIGH' region element. The Zn(2+) site is built by cysteine 143, cysteine 146, cysteine 156, and cysteine 159. Residues 350–354 (QFSSS) carry the 'KMSKS' region motif. An ATP-binding site is contributed by serine 353.

This sequence belongs to the class-I aminoacyl-tRNA synthetase family. MetG type 1 subfamily. In terms of assembly, monomer. Zn(2+) is required as a cofactor.

The protein resides in the cytoplasm. The catalysed reaction is tRNA(Met) + L-methionine + ATP = L-methionyl-tRNA(Met) + AMP + diphosphate. In terms of biological role, is required not only for elongation of protein synthesis but also for the initiation of all mRNA translation through initiator tRNA(fMet) aminoacylation. The chain is Methionine--tRNA ligase from Kineococcus radiotolerans (strain ATCC BAA-149 / DSM 14245 / SRS30216).